Consider the following 375-residue polypeptide: MADKQTVVVDNGSGVVKAGFSGEDAPRAVFPSIIGRPKNVSALIGVDSASEYIGDEAQQKRGVLKIFYPIEHGIIKDWEDMEKIWNHTFYVELRVQPDEHPVLLTEAPLNPKTNREKMTQIMFETFNVPALYVAIQAVLSLYSAGRTTGIVCDAGDGVTHTVPIYEGFSIPHAVSRIQLAGRDLTTFMAKLLTEKGYVFTSSAEMEIVRDIKEKLCFVALDYEAAMKQSYESTTFEKNYELPDGRVITIGNARFRCPEYLFKPLEMNGKELDSIQSLTYNSIQECDVDVRRDLYQNITLSGGTTMYEGIGERLLKEIEARAPKSINVKVIASPDRRFAVWRGGSTLTSLSTFASMWITKEDYDENGASIVHRKCL.

This sequence belongs to the actin family.

Its subcellular location is the cytoplasm. It is found in the cytoskeleton. It carries out the reaction ATP + H2O = ADP + phosphate + H(+). Actins are highly conserved proteins that are involved in various types of cell motility and are ubiquitously expressed in all eukaryotic cells. This chain is Actin, cytoplasmic, found in Sterkiella nova (Ciliate).